A 68-amino-acid chain; its full sequence is Conotoxin Mr3.3 (68 aa).

The first 19 residues, 1–19, serve as a signal peptide directing secretion; it reads MSRLGVLLTICLLLFPLTA. Residues 20-51 constitute a propeptide that is removed on maturation; the sequence is VPLDGDQPADRPAERLQDDISSEHHPHFDSGR. Residues 22 to 46 form a disordered region; that stretch reads LDGDQPADRPAERLQDDISSEHHPH. Basic and acidic residues predominate over residues 27–46; sequence PADRPAERLQDDISSEHHPH. 3 cysteine pairs are disulfide-bonded: cysteine 53–cysteine 67, cysteine 54–cysteine 63, and cysteine 59–cysteine 66. Proline 65 is modified (4-hydroxyproline).

It belongs to the conotoxin M superfamily. In terms of tissue distribution, expressed by the venom duct.

The protein localises to the secreted. The chain is Conotoxin Mr3.3 from Conus marmoreus (Marble cone).